We begin with the raw amino-acid sequence, 145 residues long: Transcription antitermination protein NusB (145 aa).

The protein belongs to the NusB family.

Its function is as follows. Involved in transcription antitermination. Required for transcription of ribosomal RNA (rRNA) genes. Binds specifically to the boxA antiterminator sequence of the ribosomal RNA (rrn) operons. The protein is Transcription antitermination protein NusB of Burkholderia ambifaria (strain MC40-6).